Reading from the N-terminus, the 336-residue chain is Dihydroorotate dehydrogenase (quinone) (336 aa).

FMN-binding positions include 62–66 (AGLDK) and Thr-86. Lys-66 serves as a coordination point for substrate. 111–115 (NRMGF) lines the substrate pocket. The FMN site is built by Asn-139 and Asn-172. Asn-172 provides a ligand contact to substrate. The active-site Nucleophile is the Ser-175. Asn-177 serves as a coordination point for substrate. FMN-binding residues include Lys-217 and Thr-245. 246–247 (NT) is a binding site for substrate. Residues Gly-268, Gly-297, and 318 to 319 (YS) contribute to the FMN site.

The protein belongs to the dihydroorotate dehydrogenase family. Type 2 subfamily. Monomer. It depends on FMN as a cofactor.

It is found in the cell membrane. The enzyme catalyses (S)-dihydroorotate + a quinone = orotate + a quinol. It participates in pyrimidine metabolism; UMP biosynthesis via de novo pathway; orotate from (S)-dihydroorotate (quinone route): step 1/1. Its function is as follows. Catalyzes the conversion of dihydroorotate to orotate with quinone as electron acceptor. This Aliivibrio fischeri (strain MJ11) (Vibrio fischeri) protein is Dihydroorotate dehydrogenase (quinone).